A 320-amino-acid polypeptide reads, in one-letter code: Cytochrome f (320 aa).

The first 35 residues, 1 to 35, serve as a signal peptide directing secretion; that stretch reads MQTRNTFSWIREEITRSISVSLMIYIITWASISGA. The heme site is built by Y36, C56, C59, and H60. Residues 286 to 306 form a helical membrane-spanning segment; sequence VQGLLFFLGSVVLAQIFLVLK.

It belongs to the cytochrome f family. In terms of assembly, the 4 large subunits of the cytochrome b6-f complex are cytochrome b6, subunit IV (17 kDa polypeptide, petD), cytochrome f and the Rieske protein, while the 4 small subunits are PetG, PetL, PetM and PetN. The complex functions as a dimer. Requires heme as cofactor.

It is found in the plastid. It localises to the chloroplast thylakoid membrane. Component of the cytochrome b6-f complex, which mediates electron transfer between photosystem II (PSII) and photosystem I (PSI), cyclic electron flow around PSI, and state transitions. The polypeptide is Cytochrome f (Capsella bursa-pastoris (Shepherd's purse)).